Consider the following 347-residue polypeptide: GMP reductase (347 aa).

108-131 contacts NADP(+); that stretch reads ADFQKTKDIMALTEDLIFICIDIA. Positions 181 and 183 each coordinate K(+). Cysteine 186 serves as the catalytic Thioimidate intermediate. 216 to 239 contacts NADP(+); that stretch reads IIGDGGCSCAGDVSKAFGGGADFV.

The protein belongs to the IMPDH/GMPR family. GuaC type 1 subfamily. Homotetramer.

The catalysed reaction is IMP + NH4(+) + NADP(+) = GMP + NADPH + 2 H(+). Functionally, catalyzes the irreversible NADPH-dependent deamination of GMP to IMP. It functions in the conversion of nucleobase, nucleoside and nucleotide derivatives of G to A nucleotides, and in maintaining the intracellular balance of A and G nucleotides. This is GMP reductase from Photobacterium profundum (strain SS9).